A 718-amino-acid polypeptide reads, in one-letter code: Zinc finger protein 39 (718 aa).

The KRAB domain maps to 59–130; it reads VSFEDVSVDF…EDVPKQSRAD (72 aa). Residues 298–320 form a C2H2-type 1 zinc finger; sequence FECSICKKTFCTKCELMKHKKIH. Residues 353-375 form a C2H2-type 2; degenerate zinc finger; the sequence is HRCKQCEKCFHQKNQQNVHERVP. C2H2-type zinc fingers lie at residues 409 to 431, 437 to 459, 465 to 487, 493 to 515, 521 to 543, 549 to 571, 577 to 599, 605 to 627, 633 to 655, 661 to 683, and 689 to 711; these read YGCN…QKIH, YGCE…QRTH, YECK…HRTH, YECD…QKVH, YECE…QKTH, YECN…QGTH, YQCE…QRNH, YACE…QRSH, YSCE…QRTH, YECK…QVTH, and FECQ…QRIH.

Predominantly in the spermatocytes and spermatids of testes.

The protein resides in the nucleus. Functionally, a putative DNA-binding regulatory protein associated with meiosis in spermatogenesis. The chain is Zinc finger protein 39 (Zfp39) from Mus musculus (Mouse).